The following is a 102-amino-acid chain: Hypersensitivity to hygromycin-B protein 1 (102 aa).

The signal sequence occupies residues 1 to 17 (MSLSFLLFSPFLPPCFS). Residues 18-38 (SISICLSVLSTVSFFFAFTIP) traverse the membrane as a helical segment. At 39-69 (HYVLRCGSVDEWHIHSSAEDFRTQRCVCAVK) the chain is on the cytoplasmic side. A helical transmembrane segment spans residues 70 to 90 (LSASLLGCLLACASWSLLLEV). Residues 91–102 (SRIKWHVGTAYS) are Extracellular-facing.

The protein localises to the membrane. In terms of biological role, involved in vacuolar trafficking. The polypeptide is Hypersensitivity to hygromycin-B protein 1 (Saccharomyces cerevisiae (strain ATCC 204508 / S288c) (Baker's yeast)).